We begin with the raw amino-acid sequence, 496 residues long: Cytochrome P450 71A15 (496 aa).

A helical transmembrane segment spans residues 3 to 23 (IIIISLCLATILAFLLLKPLL). Position 439 (Cys439) interacts with heme.

It belongs to the cytochrome P450 family. The cofactor is heme.

It is found in the membrane. The protein is Cytochrome P450 71A15 (CYP71A15) of Arabidopsis thaliana (Mouse-ear cress).